We begin with the raw amino-acid sequence, 141 residues long: Large ribosomal subunit protein uL11 (141 aa).

Belongs to the universal ribosomal protein uL11 family. As to quaternary structure, part of the ribosomal stalk of the 50S ribosomal subunit. Interacts with L10 and the large rRNA to form the base of the stalk. L10 forms an elongated spine to which L12 dimers bind in a sequential fashion forming a multimeric L10(L12)X complex. One or more lysine residues are methylated.

Functionally, forms part of the ribosomal stalk which helps the ribosome interact with GTP-bound translation factors. The protein is Large ribosomal subunit protein uL11 of Chloroherpeton thalassium (strain ATCC 35110 / GB-78).